Reading from the N-terminus, the 311-residue chain is E3 ubiquitin-protein ligase RNF126 (311 aa).

Ala2 bears the N-acetylalanine mark. Residue Ser5 is modified to Phosphoserine. The interval Ser5–Ala100 is required for interaction with BAG6. The Zn(2+) site is built by Cys13, Cys16, Cys29, and Cys32. The C4-type zinc finger occupies Cys13 to Cys32. 2 disordered regions span residues Glu42–Pro64 and Pro94–Thr132. The span at Thr47–Ser61 shows a compositional bias: polar residues. A compositionally biased stretch (basic and acidic residues) spans Asp103 to His116. Residues Pro117 to Thr132 are compositionally biased toward basic residues. Residues Thr200 to Asn304 are sufficient for interaction with AICDA. The RING-type zinc finger occupies Cys229–Arg270. Positions Asn277–Ser311 are disordered. Low complexity predominate over residues Ser289–Ser311.

As to quaternary structure, interacts with CCDC50, EGFR, FLT3 and SCAMP3. Interacts with BAG6 (via ubiquitin-like domain); required for BAG6-dependent ubiquitination of proteins mislocalized to the cytosol. Interacts with CDKN1A. Interacts with AICDA. Ubiquitinated. May undergo autoubiquitination. In terms of tissue distribution, highly expressed in liver and testis.

The protein resides in the cytoplasm. Its subcellular location is the nucleus. It carries out the reaction S-ubiquitinyl-[E2 ubiquitin-conjugating enzyme]-L-cysteine + [acceptor protein]-L-lysine = [E2 ubiquitin-conjugating enzyme]-L-cysteine + N(6)-ubiquitinyl-[acceptor protein]-L-lysine.. Its pathway is protein modification; protein ubiquitination. E3 ubiquitin-protein ligase that mediates ubiquitination oF target proteins. Depending on the associated E2 ligase, mediates 'Lys-27'-, 'Lys-29'-, 'Lys-48'- and/or 'Lys-63'-linked polyubiquitination of substrates. Part of a BAG6-dependent quality control process ensuring that proteins of the secretory pathway that are mislocalized to the cytosol are degraded by the proteasome. Probably acts by providing the ubiquitin ligase activity associated with the BAG6 complex and be responsible for ubiquitination of the hydrophobic mislocalized proteins and their targeting to the proteasome. May also play a role in the endosomal recycling of IGF2R, the cation-independent mannose-6-phosphate receptor. May play a role in the endosomal sorting and degradation of several membrane receptors including EGFR, FLT3, MET and CXCR4, by mediating their ubiquitination. By ubiquitinating CDKN1A/p21 and targeting it for degradation, may also promote cell proliferation. May monoubiquitinate AICDA. Acts as a regulator of DNA repair by mediating 'Lys-27'- and 'Lys-29'-linked polyubiquitination of MRE11, thereby promoting the exonuclease activity of MRE11. This Homo sapiens (Human) protein is E3 ubiquitin-protein ligase RNF126.